Consider the following 711-residue polypeptide: Polyribonucleotide nucleotidyltransferase (711 aa).

Mg(2+) contacts are provided by Asp486 and Asp492. The KH domain maps to 553-612; the sequence is PRIHTIKINPDKIKDVIGKGGSVIRALTEETGTTIEIEDDGTVKIAATDGEKAKHAIRRI. In terms of domain architecture, S1 motif spans 622–690; the sequence is GRVYTGKVTR…RQGRIRLSIK (69 aa). Residues 689–711 form a disordered region; the sequence is IKEATEQSQPAAAPEAPAAEQGE. Residues 694-711 show a composition bias toward low complexity; it reads EQSQPAAAPEAPAAEQGE.

This sequence belongs to the polyribonucleotide nucleotidyltransferase family. Component of the RNA degradosome, which is a multiprotein complex involved in RNA processing and mRNA degradation. Mg(2+) is required as a cofactor.

Its subcellular location is the cytoplasm. The catalysed reaction is RNA(n+1) + phosphate = RNA(n) + a ribonucleoside 5'-diphosphate. Involved in mRNA degradation. Catalyzes the phosphorolysis of single-stranded polyribonucleotides processively in the 3'- to 5'-direction. In Shigella boydii serotype 4 (strain Sb227), this protein is Polyribonucleotide nucleotidyltransferase.